We begin with the raw amino-acid sequence, 574 residues long: K(+)/H(+) antiporter NhaP2 (574 aa).

13 consecutive transmembrane segments (helical) span residues 6–26 (INSF…LSPM), 30–50 (LGIP…EDGL), 58–78 (YSTA…DGGM), 87–107 (VALW…TSIT), 109–129 (LMAA…GAIV), 173–193 (IAIL…VSFI), 196–216 (FGLG…LVNL), 219–239 (LAEG…YAVS), 242–262 (LGGS…NKPT), 271–291 (VLDG…GLLL), 299–319 (ILLP…PLAV), 335–355 (WFIS…VFPM), and 359–379 (LPGA…SLLI). The 82-residue stretch at 405–486 (SGVEIYPSSE…LDALSHLFSQ (82 aa)) folds into the RCK C-terminal domain.

The protein belongs to the monovalent cation:proton antiporter 1 (CPA1) transporter (TC 2.A.36) family. NhaP2 subfamily.

It localises to the cell inner membrane. It carries out the reaction K(+)(in) + H(+)(out) = K(+)(out) + H(+)(in). K(+)/H(+) antiporter that extrudes potassium in exchange for external protons and maintains the internal concentration of potassium under toxic levels. In Shewanella sp. (strain W3-18-1), this protein is K(+)/H(+) antiporter NhaP2.